A 418-amino-acid polypeptide reads, in one-letter code: Tyrosine--tRNA ligase (418 aa).

Residue Tyr-38 participates in L-tyrosine binding. Positions 43 to 52 (CTAKSLHVGS) match the 'HIGH' region motif. 2 residues coordinate L-tyrosine: Tyr-175 and Gln-179. Residues 235–239 (KMGKT) carry the 'KMSKS' region motif. Lys-238 contributes to the ATP binding site. Positions 348–413 (LPIIKLLQMC…CGKKRHLKVM (66 aa)) constitute an S4 RNA-binding domain.

Belongs to the class-I aminoacyl-tRNA synthetase family. TyrS type 1 subfamily. Homodimer.

The protein localises to the cytoplasm. It catalyses the reaction tRNA(Tyr) + L-tyrosine + ATP = L-tyrosyl-tRNA(Tyr) + AMP + diphosphate + H(+). In terms of biological role, catalyzes the attachment of tyrosine to tRNA(Tyr) in a two-step reaction: tyrosine is first activated by ATP to form Tyr-AMP and then transferred to the acceptor end of tRNA(Tyr). The polypeptide is Tyrosine--tRNA ligase (Ehrlichia chaffeensis (strain ATCC CRL-10679 / Arkansas)).